The chain runs to 60 residues: Large ribosomal subunit protein uL30 (60 aa).

This sequence belongs to the universal ribosomal protein uL30 family. As to quaternary structure, part of the 50S ribosomal subunit.

This chain is Large ribosomal subunit protein uL30, found in Alcanivorax borkumensis (strain ATCC 700651 / DSM 11573 / NCIMB 13689 / SK2).